Consider the following 131-residue polypeptide: L-ectoine synthase (131 aa).

It belongs to the ectoine synthase family.

The enzyme catalyses (2S)-4-acetamido-2-aminobutanoate = L-ectoine + H2O. Its pathway is amine and polyamine biosynthesis; ectoine biosynthesis; L-ectoine from L-aspartate 4-semialdehyde: step 3/3. Its function is as follows. Catalyzes the circularization of gamma-N-acetyl-alpha,gamma-diaminobutyric acid (ADABA) to ectoine (1,4,5,6-tetrahydro-2-methyl-4-pyrimidine carboxylic acid), which is an excellent osmoprotectant. This is L-ectoine synthase from Nocardia farcinica (strain IFM 10152).